Here is a 207-residue protein sequence, read N- to C-terminus: Claudin-11 (207 aa).

Methionine 1 is a topological domain (cytoplasmic). A helical membrane pass occupies residues 2-22 (VATCLQVVGFVTSFVGWIGVI). Residues 23-82 (VTTSTNDWVVTCGYTIPTCRKLDELGSKGLWADCVMATGLYHCKPLVDILILPGYVQACR) lie on the Extracellular side of the membrane. The chain crosses the membrane as a helical span at residues 83-103 (ALMIAASVLGLPAILLLLTVL). Residues 104–122 (PCIRMGQEPGVAKYRRAQL) lie on the Cytoplasmic side of the membrane. Residues 123-143 (AGVLLILLALCALVATIWFPV) traverse the membrane as a helical segment. Topologically, residues 144-157 (CAHRETTIVSFGYS) are extracellular. A helical membrane pass occupies residues 158 to 178 (LYAGWIGAVLCLVGGCVILCC). At 179-207 (AGDAQAFGENRFYYTAGSSSPTHAKSAHV) the chain is on the cytoplasmic side. 2 positions are modified to phosphoserine: serine 197 and serine 198.

It belongs to the claudin family. As to quaternary structure, interacts with tetraspanin-3/TSPAN3. Interacts with OCLN.

The protein resides in the cell junction. Its subcellular location is the tight junction. It is found in the cell membrane. Its function is as follows. Plays a major role in tight junction-specific obliteration of the intercellular space, through calcium-independent cell-adhesion activity. The polypeptide is Claudin-11 (CLDN11) (Homo sapiens (Human)).